The chain runs to 89 residues: Small ribosomal subunit protein uS14B (89 aa).

The tract at residues 38 to 61 is disordered; it reads KLPKDAHPSRLKLRDQTDGRPRGY. The span at 39–58 shows a compositional bias: basic and acidic residues; the sequence is LPKDAHPSRLKLRDQTDGRP.

It belongs to the universal ribosomal protein uS14 family. As to quaternary structure, part of the 30S ribosomal subunit. Contacts proteins S3 and S10.

Binds 16S rRNA, required for the assembly of 30S particles and may also be responsible for determining the conformation of the 16S rRNA at the A site. The chain is Small ribosomal subunit protein uS14B from Enterococcus faecalis (strain ATCC 700802 / V583).